The following is a 284-amino-acid chain: Cell division protein ZipA (284 aa).

A topological domain (periplasmic) is located at residue Met-1. Residues 2–22 form a helical membrane-spanning segment; it reads EIGLREWLIVIGIIVIAGILF. The Cytoplasmic segment spans residues 23-284; the sequence is DGWRRMRGGK…FERRALTQKR (262 aa). Residues 47–140 form a disordered region; it reads PDDEGSAELL…SASHSDKDQP (94 aa). Basic and acidic residues-rich tracts occupy residues 62–75, 83–102, and 119–140; these read LDTHKEPQLDEHDL, REPRESSSSKRGKRGGEPHQ, and SRDDDFPVEESKSASHSDKDQP.

The protein belongs to the ZipA family. Interacts with FtsZ via their C-terminal domains.

It is found in the cell inner membrane. In terms of biological role, essential cell division protein that stabilizes the FtsZ protofilaments by cross-linking them and that serves as a cytoplasmic membrane anchor for the Z ring. Also required for the recruitment to the septal ring of downstream cell division proteins. This Pseudomonas fluorescens (strain ATCC BAA-477 / NRRL B-23932 / Pf-5) protein is Cell division protein ZipA.